A 146-amino-acid chain; its full sequence is Hemoglobin subunit beta (146 aa).

Val-1 carries the post-translational modification N-acetylvaline. Residues 2-146 (HLTAEEKDAV…VANALAHRYH (145 aa)) enclose the Globin domain. Residue Ser-44 is modified to Phosphoserine. Lys-59 carries the post-translational modification N6-acetyllysine. His-63 contacts heme b. Residue Lys-82 is modified to N6-acetyllysine. His-92 lines the heme b pocket. Cys-93 is subject to S-nitrosocysteine.

This sequence belongs to the globin family. Heterotetramer of two alpha chains and two beta chains. Red blood cells.

In terms of biological role, involved in oxygen transport from the lung to the various peripheral tissues. The chain is Hemoglobin subunit beta (HBB) from Hippopotamus amphibius (Hippopotamus).